A 241-amino-acid polypeptide reads, in one-letter code: Large ribosomal subunit protein uL2 (241 aa).

The tract at residues 200–241 is disordered; the sequence is AVDHPHGGGNRQHPGRPTTISRHAPAGRKVGSIAAKRTGKRR.

Belongs to the universal ribosomal protein uL2 family. In terms of assembly, part of the 50S ribosomal subunit. Forms a bridge to the 30S subunit in the 70S ribosome.

Functionally, one of the primary rRNA binding proteins. Required for association of the 30S and 50S subunits to form the 70S ribosome, for tRNA binding and peptide bond formation. It has been suggested to have peptidyltransferase activity; this is somewhat controversial. Makes several contacts with the 16S rRNA in the 70S ribosome. The sequence is that of Large ribosomal subunit protein uL2 from Methanosphaera stadtmanae (strain ATCC 43021 / DSM 3091 / JCM 11832 / MCB-3).